Consider the following 65-residue polypeptide: Large ribosomal subunit protein bL35 (65 aa).

A disordered region spans residues 1–21 (MPKMKTKSGAAKRFTVRAGGT).

The protein belongs to the bacterial ribosomal protein bL35 family.

The chain is Large ribosomal subunit protein bL35 from Nitrosospira multiformis (strain ATCC 25196 / NCIMB 11849 / C 71).